The sequence spans 229 residues: DNA mismatch repair protein MutH (229 aa).

Belongs to the MutH family.

Its subcellular location is the cytoplasm. In terms of biological role, sequence-specific endonuclease that cleaves unmethylated GATC sequences. It is involved in DNA mismatch repair. The protein is DNA mismatch repair protein MutH of Shigella flexneri serotype 5b (strain 8401).